Consider the following 381-residue polypeptide: NF-kappa-B inhibitor-like protein 1 (381 aa).

Residues 1 to 34 form a disordered region; that stretch reads MSNPSPQVPEEEASTSVCRPKSSMASTSRRQRRE. ANK repeat units lie at residues 64–93 and 97–130; these read GQPPPLHRACARHDAPALCLLLRLGADPAH and HGDTALHAAARQGPDAYTDFFLPLLSRCPSAMGI. 2 disordered regions span residues 129-167 and 186-294; these read GIKNKDGETPGQILGWGPPWDSAEEEEEDDASKEREWRQ and GDAS…RGSL. A Phosphoserine modification is found at serine 150. Positions 150–159 are enriched in acidic residues; that stretch reads SAEEEEEDDA. Basic and acidic residues-rich tracts occupy residues 218-228 and 238-287; these read REAEGSRRPPR and QQEE…EHPR.

In terms of assembly, interacts with CACTIN (via N-terminal domain); the interaction occurs in a proinflammatory-independent manner. Detected in different cell types including monocytes, T-cells, B-cells and hepatocytes.

It localises to the nucleus. Its function is as follows. Involved in the regulation of innate immune response. Acts as negative regulator of Toll-like receptor and interferon-regulatory factor (IRF) signaling pathways. Contributes to the negative regulation of transcriptional activation of NF-kappa-B target genes in response to endogenous proinflammatory stimuli. The polypeptide is NF-kappa-B inhibitor-like protein 1 (NFKBIL1) (Homo sapiens (Human)).